The sequence spans 310 residues: Probable plastid-lipid-associated protein 2, chloroplastic (310 aa).

The transit peptide at 1–59 (MATVQLSTQFSCQTRVSISPNSKSISKPPFLVPVTSIIHRPMISTGGIAVSPRRVFKVR) directs the protein to the chloroplast. Phosphothreonine is present on threonine 61. Residues 65–94 (EIGSALLAAEEAIEDVEETERLKRSLVDSL) are a coiled coil.

This sequence belongs to the PAP/fibrillin family.

It localises to the plastid. It is found in the chloroplast. The protein localises to the plastoglobule. Its function is as follows. Probably involved in light/cold stress-related jasmonate (JA) biosynthesis. The protein is Probable plastid-lipid-associated protein 2, chloroplastic (PAP2) of Arabidopsis thaliana (Mouse-ear cress).